Reading from the N-terminus, the 160-residue chain is SsrA-binding protein (160 aa).

Positions 136–160 are disordered; the sequence is KRHVEKERDANREVQRAMRSKGKDD.

The protein belongs to the SmpB family.

Its subcellular location is the cytoplasm. Its function is as follows. Required for rescue of stalled ribosomes mediated by trans-translation. Binds to transfer-messenger RNA (tmRNA), required for stable association of tmRNA with ribosomes. tmRNA and SmpB together mimic tRNA shape, replacing the anticodon stem-loop with SmpB. tmRNA is encoded by the ssrA gene; the 2 termini fold to resemble tRNA(Ala) and it encodes a 'tag peptide', a short internal open reading frame. During trans-translation Ala-aminoacylated tmRNA acts like a tRNA, entering the A-site of stalled ribosomes, displacing the stalled mRNA. The ribosome then switches to translate the ORF on the tmRNA; the nascent peptide is terminated with the 'tag peptide' encoded by the tmRNA and targeted for degradation. The ribosome is freed to recommence translation, which seems to be the essential function of trans-translation. The protein is SsrA-binding protein of Ectopseudomonas mendocina (strain ymp) (Pseudomonas mendocina).